The primary structure comprises 1035 residues: Tyrosine-protein kinase-like otk (1035 aa).

The signal sequence occupies residues M1–A23. 5 consecutive Ig-like C2-type domains span residues S24–S109, P110–S199, P251–N365, P368–N464, and P469–V559. The Extracellular segment spans residues S24–A582. 5 disulfide bridges follow: C47/C96, C138/C188, C276/C354, C399/C448, and C491/C543. Residues N336, N418, N430, N445, N513, and N525 are each glycosylated (N-linked (GlcNAc...) asparagine). The helical transmembrane segment at V583 to W603 threads the bilayer. Residues C604–K1035 lie on the Cytoplasmic side of the membrane. 2 disordered regions span residues A623–Y683 and A721–E775. Over residues K658–R676 the composition is skewed to polar residues. A Phosphoserine modification is found at S681. Residues L693–M1029 enclose the Protein kinase; inactive domain. The span at S723–S734 shows a compositional bias: basic and acidic residues. The segment covering D766–E775 has biased composition (acidic residues).

The protein belongs to the protein kinase superfamily. Tyr protein kinase family. Insulin receptor subfamily. As to quaternary structure, interacts with plexA; component of a receptor complex that mediates the repulsive signaling in response to Semaphorin ligands.

The protein resides in the cell membrane. In terms of biological role, acts as a calcium-dependent, homophilic cell adhesion molecule that regulates neural recognition during the development of the nervous system. Component of the repulsive Plexin signaling response to regulate motor axon guidance at the embryonic stage. Also component of a receptor complex that is required in the adult visual system to innervate the lamina layer; specific targeting of R1-R6 axons. The polypeptide is Tyrosine-protein kinase-like otk (Drosophila persimilis (Fruit fly)).